The chain runs to 184 residues: MEEERRLRGRLSRRRPPAGGGPPNCRPWFLSEESKSEPWAALLRSTVGGNTDWTPNSQPLPPLPAFPSQESLPDPESTVPPEVFTVGSKTFSWTPFPPALRGSGSSCRLLRCPEGSPGSPAPSLKGCPALDSRQTPSTQECVQSQLVLLNCPLCQKAFDPKLTQLDVDSHLAQCLAESTEDVVW.

2 disordered regions span residues 1–30 (MEEE…PWFL) and 46–81 (TVGG…TVPP). Basic residues predominate over residues 7–16 (LRGRLSRRRP). Polar residues predominate over residues 47-57 (VGGNTDWTPNS). The residue at position 119 (Ser119) is a Phosphoserine. Residues 148–184 (LLNCPLCQKAFDPKLTQLDVDSHLAQCLAESTEDVVW) form a UBZ2-type zinc finger. Zn(2+)-binding residues include Cys151, Cys154, His170, and Cys174.

Component of the Fanconi anemia (FA) complex. Interacts with FANCA; interaction is direct. Interacts with REV1.

The protein localises to the nucleus. It localises to the chromosome. Component of the Fanconi anemia (FA) complex required to recruit the FA complex to DNA interstrand cross-links (ICLs) and promote ICLs repair. Following DNA damage recognizes and binds 'Lys-63'-linked ubiquitin generated by RNF8 at ICLs and recruits other components of the FA complex. Promotes translesion synthesis via interaction with REV1. This chain is Fanconi anemia core complex-associated protein 20, found in Rattus norvegicus (Rat).